A 212-amino-acid chain; its full sequence is Chloramphenicol acetyltransferase (212 aa).

The active-site Proton acceptor is histidine 186.

This sequence belongs to the chloramphenicol acetyltransferase family. In terms of assembly, homotrimer.

It carries out the reaction chloramphenicol + acetyl-CoA = chloramphenicol 3-acetate + CoA. Its function is as follows. This enzyme is an effector of chloramphenicol resistance in bacteria. In Clostridioides difficile (Peptoclostridium difficile), this protein is Chloramphenicol acetyltransferase (catD).